The primary structure comprises 616 residues: Dihydroxy-acid dehydratase (616 aa).

Asp-81 contacts Mg(2+). Cys-122 contacts [2Fe-2S] cluster. Residues Asp-123 and Lys-124 each contribute to the Mg(2+) site. At Lys-124 the chain carries N6-carboxylysine. Cys-197 contributes to the [2Fe-2S] cluster binding site. A Mg(2+)-binding site is contributed by Glu-493. The Proton acceptor role is filled by Ser-519.

This sequence belongs to the IlvD/Edd family. Homodimer. The cofactor is [2Fe-2S] cluster. Mg(2+) is required as a cofactor.

The enzyme catalyses (2R)-2,3-dihydroxy-3-methylbutanoate = 3-methyl-2-oxobutanoate + H2O. It carries out the reaction (2R,3R)-2,3-dihydroxy-3-methylpentanoate = (S)-3-methyl-2-oxopentanoate + H2O. Its pathway is amino-acid biosynthesis; L-isoleucine biosynthesis; L-isoleucine from 2-oxobutanoate: step 3/4. It participates in amino-acid biosynthesis; L-valine biosynthesis; L-valine from pyruvate: step 3/4. Functions in the biosynthesis of branched-chain amino acids. Catalyzes the dehydration of (2R,3R)-2,3-dihydroxy-3-methylpentanoate (2,3-dihydroxy-3-methylvalerate) into 2-oxo-3-methylpentanoate (2-oxo-3-methylvalerate) and of (2R)-2,3-dihydroxy-3-methylbutanoate (2,3-dihydroxyisovalerate) into 2-oxo-3-methylbutanoate (2-oxoisovalerate), the penultimate precursor to L-isoleucine and L-valine, respectively. This Corynebacterium kroppenstedtii (strain DSM 44385 / JCM 11950 / CIP 105744 / CCUG 35717) protein is Dihydroxy-acid dehydratase.